Here is a 354-residue protein sequence, read N- to C-terminus: Uroporphyrinogen decarboxylase (354 aa).

Substrate contacts are provided by residues 27-31, aspartate 77, tyrosine 154, threonine 209, and histidine 327; that span reads RQAGR.

Belongs to the uroporphyrinogen decarboxylase family. In terms of assembly, homodimer.

It is found in the cytoplasm. The catalysed reaction is uroporphyrinogen III + 4 H(+) = coproporphyrinogen III + 4 CO2. The protein operates within porphyrin-containing compound metabolism; protoporphyrin-IX biosynthesis; coproporphyrinogen-III from 5-aminolevulinate: step 4/4. Functionally, catalyzes the decarboxylation of four acetate groups of uroporphyrinogen-III to yield coproporphyrinogen-III. In Escherichia coli (strain 55989 / EAEC), this protein is Uroporphyrinogen decarboxylase.